A 382-amino-acid chain; its full sequence is uncharacterized protein (382 aa).

Transmembrane regions (helical) follow at residues 8–28 (VMLL…LNTL), 45–65 (MVSS…GYLI), 75–95 (YLAS…VGFW), 102–122 (FIAG…LMCS), 131–151 (LLAA…LLVS), 157–177 (LLHV…PLLF), 204–224 (LGVN…GLMP), 231–251 (GMAN…GILG), 270–290 (VQVF…AMAP), 291–311 (ALFI…AWAC), 325–345 (ALLL…AMLM), and 349–369 (SDNL…LMLL).

It belongs to the major facilitator superfamily. YcaD (TC 2.A.1.26) family.

It localises to the cell inner membrane. This is an uncharacterized protein from Salmonella enteritidis PT4 (strain P125109).